A 379-amino-acid chain; its full sequence is Alcohol dehydrogenase 2 (379 aa).

Cysteine 47, threonine 49, histidine 69, cysteine 99, cysteine 102, cysteine 105, cysteine 113, and cysteine 177 together coordinate Zn(2+). Residues threonine 49 and histidine 69 each coordinate an alcohol. Threonine 49 lines the NAD(+) pocket. NAD(+)-binding positions include 202–207, aspartate 226, lysine 231, threonine 272, valine 295, 295–297, phenylalanine 322, and arginine 372; these read GLGAVG and VGV.

The protein belongs to the zinc-containing alcohol dehydrogenase family. Homodimer. Zn(2+) is required as a cofactor.

It is found in the cytoplasm. It catalyses the reaction a primary alcohol + NAD(+) = an aldehyde + NADH + H(+). The catalysed reaction is a secondary alcohol + NAD(+) = a ketone + NADH + H(+). This chain is Alcohol dehydrogenase 2 (ADH2), found in Zea mays (Maize).